The sequence spans 158 residues: Urease subunit beta (158 aa).

The tract at residues 113–158 (EDDWRRSSAAGDAPQELPQVEAAERGRKLDEATDVGTEDTPEEGQN) is disordered. Positions 134 to 143 (AAERGRKLDE) are enriched in basic and acidic residues. Residues 144-158 (ATDVGTEDTPEEGQN) show a composition bias toward acidic residues.

This sequence belongs to the urease beta subunit family. In terms of assembly, heterotrimer of UreA (gamma), UreB (beta) and UreC (alpha) subunits. Three heterotrimers associate to form the active enzyme.

It is found in the cytoplasm. It carries out the reaction urea + 2 H2O + H(+) = hydrogencarbonate + 2 NH4(+). Its pathway is nitrogen metabolism; urea degradation; CO(2) and NH(3) from urea (urease route): step 1/1. This chain is Urease subunit beta, found in Corynebacterium glutamicum (strain R).